Reading from the N-terminus, the 236-residue chain is MPGGPGLLQALCATTFLLFLISAGGLGPGSQALWVDGGPPSMTVSLGETARLQCLHNRSRLSSKLNITWWRVLQGNATWPDIFLSYGKGPNGELTIDTVNKSHMGMYRCQVEEKDLNQKILSSQQSCGTYLRVRERLPRPFLDMGEGTKNNIITAEGIILLFCAVVPGTLLLFRKRWQNMKFGVDAQDDYEDENLYEGLNLDDCSMYEDISRGLQGTYQDVGSLHIGDGDVQLEKP.

Residues 1–32 (MPGGPGLLQALCATTFLLFLISAGGLGPGSQA) form the signal peptide. Residues 33–122 (LWVDGGPPSM…EKDLNQKILS (90 aa)) enclose the Ig-like C2-type domain. Topologically, residues 33 to 151 (LWVDGGPPSM…LDMGEGTKNN (119 aa)) are extracellular. Cysteine 54 and cysteine 109 are oxidised to a cystine. N-linked (GlcNAc...) asparagine glycans are attached at residues asparagine 66 and asparagine 76. The helical transmembrane segment at 152 to 172 (IITAEGIILLFCAVVPGTLLL) threads the bilayer. Residues 173–236 (FRKRWQNMKF…GDGDVQLEKP (64 aa)) are Cytoplasmic-facing. Residues 185-213 (DAQDDYEDENLYEGLNLDDCSMYEDISRG) enclose the ITAM domain. Position 196 is a phosphotyrosine; by SRC-type Tyr-kinases (tyrosine 196). Position 207 is a phosphotyrosine (tyrosine 207). Arginine 212 is modified (asymmetric dimethylarginine; by PRMT1). At tyrosine 218 the chain carries Phosphotyrosine; by Tyr-kinases.

As to quaternary structure, heterodimer of alpha and beta chains; disulfide-linked. Part of the B-cell antigen receptor complex where the alpha/beta chain heterodimer is non-covalently associated with an antigen-specific membrane-bound surface immunoglobulin of two heavy chains and two light chains. Interacts through its phosphorylated ITAM domain with the SH2 domains of SYK which stimulates SYK autophosphorylation and activation. Also interacts, when phosphorylated on Tyr-207, with the SH2 domain of BLNK/SLP65, bringing BLNK into proximity with SYK and allowing SYK to phosphorylate BLNK which is necessary for trafficking of the BCR to late endosomes. Interacts with Src-family tyrosine kinases including FYN and LYN, increasing their activity. Phosphorylated on tyrosine, serine and threonine residues upon B-cell activation. Phosphorylation of tyrosine residues by Src-family kinases, including LYN, is an early and essential feature of the BCR signaling cascade. The phosphorylated tyrosines serve as docking sites for SH2-domain containing kinases, leading to their activation which in turn leads to phosphorylation of downstream targets. Phosphorylation of serine and threonine residues may prevent subsequent tyrosine phosphorylation. Post-translationally, arginine methylation in the ITAM domain may interfere with the binding of SYK. It promotes signals leading to B-cell differentiation.

The protein localises to the cell membrane. Required in cooperation with CD79B for initiation of the signal transduction cascade activated by binding of antigen to the B-cell antigen receptor complex (BCR) which leads to internalization of the complex, trafficking to late endosomes and antigen presentation. Also required for BCR surface expression and for efficient differentiation of pro- and pre-B-cells. Stimulates SYK autophosphorylation and activation. Binds to BLNK, bringing BLNK into proximity with SYK and allowing SYK to phosphorylate BLNK. Also interacts with and increases activity of some Src-family tyrosine kinases. Represses BCR signaling during development of immature B-cells. The sequence is that of B-cell antigen receptor complex-associated protein alpha chain (CD79A) from Canis lupus familiaris (Dog).